We begin with the raw amino-acid sequence, 284 residues long: Tryptophan 2,3-dioxygenase (284 aa).

Substrate-binding positions include 51 to 55 (FIIQH), Tyr-113, and Arg-117. Residue His-240 coordinates heme. Thr-254 provides a ligand contact to substrate.

Belongs to the tryptophan 2,3-dioxygenase family. In terms of assembly, homotetramer. Requires heme as cofactor.

The catalysed reaction is L-tryptophan + O2 = N-formyl-L-kynurenine. The protein operates within amino-acid degradation; L-tryptophan degradation via kynurenine pathway; L-kynurenine from L-tryptophan: step 1/2. In terms of biological role, heme-dependent dioxygenase that catalyzes the oxidative cleavage of the L-tryptophan (L-Trp) pyrrole ring and converts L-tryptophan to N-formyl-L-kynurenine. Catalyzes the oxidative cleavage of the indole moiety. This Arthrobacter sp. (strain FB24) protein is Tryptophan 2,3-dioxygenase.